The sequence spans 129 residues: Glycine cleavage system H protein (129 aa).

Residues 23 to 105 form the Lipoyl-binding domain; sequence SAVVGITEHA…YGEGWLAKFS (83 aa). K64 bears the N6-lipoyllysine mark.

It belongs to the GcvH family. In terms of assembly, the glycine cleavage system is composed of four proteins: P, T, L and H. (R)-lipoate is required as a cofactor.

The glycine cleavage system catalyzes the degradation of glycine. The H protein shuttles the methylamine group of glycine from the P protein to the T protein. The sequence is that of Glycine cleavage system H protein from Herpetosiphon aurantiacus (strain ATCC 23779 / DSM 785 / 114-95).